The sequence spans 31 residues: Putative translational regulatory protein ArgL (31 aa).

In terms of biological role, may serve a regulatory role in expression of downstream gene argF; in an argL-argF-lacZ fusion mutation of the start codon to a stop codon in argL increases expression of beta-galactosidase. This is Putative translational regulatory protein ArgL from Escherichia coli (strain K12).